A 179-amino-acid chain; its full sequence is Apoptosis regulator Bcl-2 homolog (179 aa).

The BH1 signature appears at 76-95 (ELFKDLINWGRICGFIVFSA). Residues 126 to 141 (PWMISHGGQEEFLAFS) carry the BH2 motif.

Belongs to the Bcl-2 family. Interacts with host BECN1 (via BH3 homology domain); this interaction allows the virus to inhibit BECN1, and thus autophagy. Interacts with host BID. Interacts with host BAX.

It is found in the host mitochondrion. Its subcellular location is the host endoplasmic reticulum. Suppresses apoptosis in host cell to promote the viral replication. Has the ability to potentially bind to all the members of the proapoptotic Bcl-2 family. Inhibits autophagy by interacting with host Beclin 1 (BECN1). This chain is Apoptosis regulator Bcl-2 homolog, found in African swine fever virus (isolate Tick/South Africa/Pretoriuskop Pr4/1996) (ASFV).